A 104-amino-acid polypeptide reads, in one-letter code: Small ribosomal subunit protein bS6c (104 aa).

It belongs to the bacterial ribosomal protein bS6 family.

The protein localises to the plastid. It localises to the cyanelle. Functionally, binds together with bS18 to 16S ribosomal RNA. This chain is Small ribosomal subunit protein bS6c (rps6), found in Cyanophora paradoxa.